A 240-amino-acid chain; its full sequence is Probable transcriptional regulatory protein Csal_0810 (240 aa).

The protein belongs to the TACO1 family.

It localises to the cytoplasm. This Chromohalobacter salexigens (strain ATCC BAA-138 / DSM 3043 / CIP 106854 / NCIMB 13768 / 1H11) protein is Probable transcriptional regulatory protein Csal_0810.